Consider the following 64-residue polypeptide: uncharacterized protein (64 aa).

This is an uncharacterized protein from Sulfolobus islandicus filamentous virus (isolate Iceland/Hveragerdi) (SIFV).